A 277-amino-acid polypeptide reads, in one-letter code: Bifunctional protein FolD (277 aa).

NADP(+) contacts are provided by residues 164-166 (GRS), Ser-189, and Val-230.

Belongs to the tetrahydrofolate dehydrogenase/cyclohydrolase family. In terms of assembly, homodimer.

It catalyses the reaction (6R)-5,10-methylene-5,6,7,8-tetrahydrofolate + NADP(+) = (6R)-5,10-methenyltetrahydrofolate + NADPH. The enzyme catalyses (6R)-5,10-methenyltetrahydrofolate + H2O = (6R)-10-formyltetrahydrofolate + H(+). The protein operates within one-carbon metabolism; tetrahydrofolate interconversion. In terms of biological role, catalyzes the oxidation of 5,10-methylenetetrahydrofolate to 5,10-methenyltetrahydrofolate and then the hydrolysis of 5,10-methenyltetrahydrofolate to 10-formyltetrahydrofolate. The polypeptide is Bifunctional protein FolD (Exiguobacterium sibiricum (strain DSM 17290 / CCUG 55495 / CIP 109462 / JCM 13490 / 255-15)).